The chain runs to 248 residues: Transcription factor MYBC1 (248 aa).

Positions 102-161 (TLKRPRLVWTPQLHKRFVDAVGHLGIKNAVPKTIMQLMSVEGLTRENVASHLQKYRLYLR) form a DNA-binding region, myb-like GARP.

In terms of tissue distribution, expressed in roots, leaves, stems, petioles, filaments, stigma, pedicels, sepals, anthers, petals, and siliques.

It localises to the nucleus. In terms of biological role, probable transcription factor that acts as a negative regulator of freezing tolerance via a CBF-independent pathway. This Arabidopsis thaliana (Mouse-ear cress) protein is Transcription factor MYBC1.